The following is a 423-amino-acid chain: Acetylornithine aminotransferase, mitochondrial (423 aa).

A mitochondrion-targeting transit peptide spans Met1–Arg13. The residue at position 276 (Lys276) is an N6-(pyridoxal phosphate)lysine.

The protein belongs to the class-III pyridoxal-phosphate-dependent aminotransferase family. The cofactor is pyridoxal 5'-phosphate.

It is found in the mitochondrion matrix. The enzyme catalyses N(2)-acetyl-L-ornithine + 2-oxoglutarate = N-acetyl-L-glutamate 5-semialdehyde + L-glutamate. It functions in the pathway amino-acid biosynthesis; L-arginine biosynthesis; N(2)-acetyl-L-ornithine from L-glutamate: step 4/4. In terms of biological role, catalyzes the conversion of N-acetylglutamate-gamma-semialdehyde (NAGSA) to N-acetylornithine in arginine biosynthesis. The polypeptide is Acetylornithine aminotransferase, mitochondrial (ARG8) (Saccharomyces cerevisiae (strain ATCC 204508 / S288c) (Baker's yeast)).